A 370-amino-acid polypeptide reads, in one-letter code: UDP-N-acetylglucosamine--N-acetylmuramyl-(pentapeptide) pyrophosphoryl-undecaprenol N-acetylglucosamine transferase (370 aa).

UDP-N-acetyl-alpha-D-glucosamine contacts are provided by residues 14 to 16 (TGG), Asn-125, Arg-168, Ser-196, and Gln-297.

The protein belongs to the glycosyltransferase 28 family. MurG subfamily.

The protein resides in the cell inner membrane. The enzyme catalyses di-trans,octa-cis-undecaprenyl diphospho-N-acetyl-alpha-D-muramoyl-L-alanyl-D-glutamyl-meso-2,6-diaminopimeloyl-D-alanyl-D-alanine + UDP-N-acetyl-alpha-D-glucosamine = di-trans,octa-cis-undecaprenyl diphospho-[N-acetyl-alpha-D-glucosaminyl-(1-&gt;4)]-N-acetyl-alpha-D-muramoyl-L-alanyl-D-glutamyl-meso-2,6-diaminopimeloyl-D-alanyl-D-alanine + UDP + H(+). It functions in the pathway cell wall biogenesis; peptidoglycan biosynthesis. Its function is as follows. Cell wall formation. Catalyzes the transfer of a GlcNAc subunit on undecaprenyl-pyrophosphoryl-MurNAc-pentapeptide (lipid intermediate I) to form undecaprenyl-pyrophosphoryl-MurNAc-(pentapeptide)GlcNAc (lipid intermediate II). The sequence is that of UDP-N-acetylglucosamine--N-acetylmuramyl-(pentapeptide) pyrophosphoryl-undecaprenol N-acetylglucosamine transferase from Nitrobacter hamburgensis (strain DSM 10229 / NCIMB 13809 / X14).